Here is a 352-residue protein sequence, read N- to C-terminus: S-adenosylmethionine:tRNA ribosyltransferase-isomerase (352 aa).

It belongs to the QueA family. In terms of assembly, monomer.

It is found in the cytoplasm. It carries out the reaction 7-aminomethyl-7-carbaguanosine(34) in tRNA + S-adenosyl-L-methionine = epoxyqueuosine(34) in tRNA + adenine + L-methionine + 2 H(+). The protein operates within tRNA modification; tRNA-queuosine biosynthesis. Its function is as follows. Transfers and isomerizes the ribose moiety from AdoMet to the 7-aminomethyl group of 7-deazaguanine (preQ1-tRNA) to give epoxyqueuosine (oQ-tRNA). This chain is S-adenosylmethionine:tRNA ribosyltransferase-isomerase, found in Allorhizobium ampelinum (strain ATCC BAA-846 / DSM 112012 / S4) (Agrobacterium vitis (strain S4)).